The sequence spans 782 residues: MQVLVMLLAAAGTYLGLLTAPTAASNPGRQDTPSTLPLHRRQKRDWIWNQMHIDEEKNGSLPHYVGKIKSSVNHKNTKYQLKGESAGKVFRVDENTGDVYAFERLDREKIPEYQLVALVVDKNTEKNLESPSSFTIKVHDINDNWPVFTQLVFNASVPEMSVIGTSVIQLTAVDADDPTVADHASVIYRLKEGEEHFRIRGPGLIETASKNLDRETVPMYKIVVETQDAQGLRGDSGTATVFITLQDVNDNFPVFTQTRYTFSVPEDIRVGSPLGSLFVKDPDEPQNRKTKYSIVQGEYRDTFTIEPDPTRNEGIIKPMKPLDYERIQQYSFTIEATDPTIDLRYLSGTSTKNIARVIINVTDVDEPPNFKQPFYHFQLRENEKKPWIGSVLAVDPDAAQRSIGYSIRRTSDKGQFFGINKHGNIYNVKELDREVYPWYNLTVEAKELDSRGTPTGKESIVQVHIEVLDENDNAPEFAKPYEAKVCEDAPQGKLVVQISAIDKDVTPRDVKFKFSLSTEDSNFTLTDNHDNTANITVKHGYFDRERAKVHHLPILISDNGRPSLTGTSTLHVTVCKCNERGEFTLCEEMGAQVGVSIQALVAIFLCILTIAVISLLVYLRRRLRKQARAHGKSVPEIHEQLVTYDEEGGGEMDTTSYDVSVLNSVRHGGAKPPRPALDARPSLYAQVQKPPRHAPGAHAPGEMAAMIEVKKDEADHDGGGPPYDTLHIFGYEGAESIAESLSSLGTDSSDSDIDYDFLNDWGPRFKMLAELYGSDPREELLY.

The first 22 residues, 1-22 (MQVLVMLLAAAGTYLGLLTAPT), serve as a signal peptide directing secretion. The propeptide occupies 23–44 (AASNPGRQDTPSTLPLHRRQKR). Cadherin domains are found at residues 45–148 (DWIW…WPVF), 149–255 (TQLV…FPVF), 256–370 (TQTR…PPNF), 371–475 (KQPF…DNAP), and 476–592 (EFAK…MGAQ). At 45–598 (DWIWNQMHID…MGAQVGVSIQ (554 aa)) the chain is on the extracellular side. Ca(2+) is bound by residues Glu55 and Glu56. A glycan (N-linked (GlcNAc...) asparagine) is linked at Asn58. Residues Asp106, Glu108, Asp140, Ile141, Asn142, Asp143, and Asn144 each contribute to the Ca(2+) site. The N-linked (GlcNAc...) asparagine glycan is linked to Asn154. Ca(2+) contacts are provided by Asp174, Asp176, His183, and Asp228. Residues Asn360, Asn440, Asn522, and Asn534 are each glycosylated (N-linked (GlcNAc...) asparagine). Residues 599-619 (ALVAIFLCILTIAVISLLVYL) traverse the membrane as a helical segment. A required for interaction with PALS1 region spans residues 620–659 (RRRLRKQARAHGKSVPEIHEQLVTYDEEGGGEMDTTSYDV). Residues 620 to 782 (RRRLRKQARA…GSDPREELLY (163 aa)) are Cytoplasmic-facing.

Part of a complex composed of AMOTL2, MAGI1 and CDH5, within the complex AMOTL2 acts as a scaffold protein for the interaction of MAGI1 with CDH5. The complex is required for coupling actin fibers to cell junctions in endothelial cells. Within the complex AMOTL2 (via its N-terminus) interacts with CDH5. Interacts (via cadherin 5 domain) with PTPRB. Interacts with TRPC4. Interacts with KRIT1. Interacts with PARD3. Interacts with RTN4 (isoform B). Interacts with PALS1; the interaction promotes PALS1 localization to cell junctions and is required for CDH5-mediated vascular lumen formation and endothelial cell. Interacts with CTNND1/p120-catenin; the interaction controls CADH5 endocytosis. Post-translationally, phosphorylated on tyrosine residues by KDR/VEGFR-2. Dephosphorylated by PTPRB. In terms of processing, O-glycosylated.

The protein resides in the cell junction. Its subcellular location is the adherens junction. It is found in the cell membrane. It localises to the cytoplasm. Cadherins are calcium-dependent cell adhesion proteins. They preferentially interact with themselves in a homophilic manner in connecting cells; cadherins may thus contribute to the sorting of heterogeneous cell types. This cadherin may play a important role in endothelial cell biology through control of the cohesion and organization of the intercellular junctions. It associates with alpha-catenin forming a link to the cytoskeleton. Plays a role in coupling actin fibers to cell junctions in endothelial cells, via acting as a cell junctional complex anchor for AMOTL2 and MAGI1. Acts in concert with KRIT1 and PALS1 to establish and maintain correct endothelial cell polarity and vascular lumen. These effects are mediated by recruitment and activation of the Par polarity complex and RAP1B. Required for activation of PRKCZ and for localization of phosphorylated PRKCZ, PARD3, TIAM1 and RAP1B to the cell junction. Associates with CTNND1/p120-catenin to control CADH5 endocytosis. This Sus scrofa (Pig) protein is Cadherin-5.